The primary structure comprises 474 residues: MTTPSTSNAPKTLYQKVWDAHVVATPEGEAPIIYVDRHLVHEVTSPQAFSGLKVAGRKLRAPEKTFATMDHNTSTRSASLDALSPMARTQVETLAQNCKDFGVRLYDIHHPNQGIVHVMGPELGITLPGTVIVCGDSHTATHGAFGALAFGIGTSEVEHVLATQTLRQLKAKTMKIEVRGQVTDGVTAKDIVLAIIGKIGMDGGTGYVVEFCGEAIEALSMEGRMTVCNMAIEMGAKAGMVAPDQTTFDYLEGREFAPKGEDWAEAVAAWKALKTDVGAEFDATVVLDAANIAPQLTWGTNPGQVVAIDAPVPNPADEANPTIRASMEKALDYIGLTAGTPMTDVAINKVFIGSCTNSRIEDLRSAAKQAKGRKVASGVTAIVVPGSGQVKAQAEAEGLDKIFIEAGFEWRLPGCSMCLAMNDDRLEAGDRCASTSNRNFEGRQGRGSRTHLVSPAMAAAAAIAGHFVDIRKPY.

Cys355, Cys415, and Cys418 together coordinate [4Fe-4S] cluster.

Belongs to the aconitase/IPM isomerase family. LeuC type 1 subfamily. Heterodimer of LeuC and LeuD. [4Fe-4S] cluster serves as cofactor.

It carries out the reaction (2R,3S)-3-isopropylmalate = (2S)-2-isopropylmalate. Its pathway is amino-acid biosynthesis; L-leucine biosynthesis; L-leucine from 3-methyl-2-oxobutanoate: step 2/4. In terms of biological role, catalyzes the isomerization between 2-isopropylmalate and 3-isopropylmalate, via the formation of 2-isopropylmaleate. This chain is 3-isopropylmalate dehydratase large subunit, found in Shewanella sp. (strain ANA-3).